The chain runs to 555 residues: Carboxylic ester hydrolase (555 aa).

The signal sequence occupies residues 1 to 19; that stretch reads MELSVIALLLLGFVNFSWQ. A disulfide bond links Cys-86 and Cys-107. N-linked (GlcNAc...) asparagine glycosylation is found at Asn-120 and Asn-144. Residue Ser-211 is the Acyl-ester intermediate of the active site. Cys-263 and Cys-274 form a disulfide bridge. Glu-336 acts as the Charge relay system in catalysis. Residues Asn-369 and Asn-397 are each glycosylated (N-linked (GlcNAc...) asparagine). His-459 serves as the catalytic Charge relay system. Residues Asn-473 and Asn-533 are each glycosylated (N-linked (GlcNAc...) asparagine).

It belongs to the type-B carboxylesterase/lipase family. In terms of processing, N-glycosylated. In terms of tissue distribution, expressed in several tissues, including epidermis (at protein level), fat body (at protein level), gut (at protein level), muscle (at protein level), and venom gland (at protein level).

It is found in the secreted. It carries out the reaction a carboxylic ester + H2O = an alcohol + a carboxylate + H(+). Its function is as follows. Lipolytic agent that may be involved in distributing the venom via degradation of blood triglycerides. The recombinant protein degrades triglycerides and exhibits high lipolytic activity toward long-chain triglycerides (tested on tributyrin, trioctanoin and triolein). Does not affect mammalian cells. The sequence is that of Carboxylic ester hydrolase (vCaE) from Bombus ignitus (Bumblebee).